The primary structure comprises 350 residues: Tetraacyldisaccharide 4'-kinase (350 aa).

48–55 (SAGGTGKT) provides a ligand contact to ATP.

Belongs to the LpxK family.

The catalysed reaction is a lipid A disaccharide + ATP = a lipid IVA + ADP + H(+). It participates in glycolipid biosynthesis; lipid IV(A) biosynthesis; lipid IV(A) from (3R)-3-hydroxytetradecanoyl-[acyl-carrier-protein] and UDP-N-acetyl-alpha-D-glucosamine: step 6/6. Transfers the gamma-phosphate of ATP to the 4'-position of a tetraacyldisaccharide 1-phosphate intermediate (termed DS-1-P) to form tetraacyldisaccharide 1,4'-bis-phosphate (lipid IVA). The sequence is that of Tetraacyldisaccharide 4'-kinase from Chlorobium limicola (strain DSM 245 / NBRC 103803 / 6330).